We begin with the raw amino-acid sequence, 103 residues long: Large ribosomal subunit protein uL24 (103 aa).

Belongs to the universal ribosomal protein uL24 family. As to quaternary structure, part of the 50S ribosomal subunit.

Its function is as follows. One of two assembly initiator proteins, it binds directly to the 5'-end of the 23S rRNA, where it nucleates assembly of the 50S subunit. Functionally, one of the proteins that surrounds the polypeptide exit tunnel on the outside of the subunit. The chain is Large ribosomal subunit protein uL24 from Geobacillus stearothermophilus (Bacillus stearothermophilus).